The chain runs to 780 residues: Putative ABC transporter ATP-binding protein BL0043 (780 aa).

2 ABC transporter domains span residues 2–238 (LKDI…QSET) and 282–531 (IRVS…GPAH). ATP is bound at residue 34–41 (GPNGSGKS). The segment at 230–272 (AEAVSQSETEGSIGTEAAPSRPTNDSPRQREREDGSELPLLSD) is disordered. 316 to 323 (GVNGSGKS) serves as a coordination point for ATP. 4 helical membrane-spanning segments follow: residues 551–573 (FTMF…LAVI), 586–608 (SIHP…VRTG), 623–645 (GVTI…AVFL), and 759–778 (IAAR…AAII).

Belongs to the ABC transporter superfamily.

Its subcellular location is the cell membrane. Its function is as follows. Probably part of an ABC transporter complex. Responsible for energy coupling to the transport system. The chain is Putative ABC transporter ATP-binding protein BL0043 from Bifidobacterium longum (strain NCC 2705).